The chain runs to 555 residues: Formate--tetrahydrofolate ligase (555 aa).

65–72 contacts ATP; the sequence is TPAGEGKT.

The protein belongs to the formate--tetrahydrofolate ligase family.

The catalysed reaction is (6S)-5,6,7,8-tetrahydrofolate + formate + ATP = (6R)-10-formyltetrahydrofolate + ADP + phosphate. It functions in the pathway one-carbon metabolism; tetrahydrofolate interconversion. This is Formate--tetrahydrofolate ligase from Syntrophomonas wolfei subsp. wolfei (strain DSM 2245B / Goettingen).